The following is a 678-amino-acid chain: Glutamic acid-rich protein (678 aa).

The first 25 residues, 1–25 (MNVLFLSYNICILFFVVCTLNFSTK), serve as a signal peptide directing secretion. Positions 56–79 (EKNKDDNSKSETLLKEEKDEKDDV) are enriched in basic and acidic residues. 3 disordered regions span residues 56-194 (EKNK…NLDE), 225-445 (ISSV…VVKN), and 520-678 (VVPR…NAKI). The segment covering 80–107 (PTTSNDNLKNAHNNNEISSSTDPTNIIN) has biased composition (polar residues). Positions 109–120 (NDKDNENSVDKK) are enriched in basic and acidic residues. Repeat copies occupy residues 120–122 (KKD), 123–125 (KKE), 126–128 (KKH), 129–131 (KKD), 132–134 (KKE), 135–137 (KKE), 138–140 (KKD), 141–143 (KKE), 144–146 (KKD), 147–149 (KKE), 150–152 (KKH), 153–155 (KKE), 156–158 (KKH), 159–161 (KKD), and 162–164 (KKK). The interval 120 to 164 (KKDKKEKKHKKDKKEKKEKKDKKEKKDKKEKKHKKEKKHKKDKKK) is 15 X 3 AA tandem repeats of K-K-[DEHK]. The span at 121 to 165 (KDKKEKKHKKDKKEKKEKKDKKEKKDKKEKKHKKEKKHKKDKKKK) shows a compositional bias: basic residues. 2 stretches are compositionally biased toward basic and acidic residues: residues 231 to 329 (TSND…EEKE) and 371 to 411 (PEEH…EHKS). Repeat copies occupy residues 372-376 (EEHKE), 377-381 (GEHKE), 382-386 (EEHKE), 387-391 (GEHKE), 392-396 (GEHKE), 397-401 (EEHKE), 402-406 (EEHKK), 407-411 (EEHKS), 412-416 (KEHKS), 417-421 (KGKKD), 422-426 (KGKKD), 427-431 (KGKHK), 432-436 (KAKKE), and 437-441 (KVKKH). Residues 372–416 (EEHKEGEHKEEEHKEGEHKEGEHKEEEHKEEEHKKEEHKSKEHKS) are 9 X 5 AA tandem repeats of [EGK]-E-H-K-[EKS]. The segment covering 412-443 (KEHKSKGKKDKGKKDKGKHKKAKKEKVKKHVV) has biased composition (basic residues). The tract at residues 417–441 (KGKKDKGKKDKGKHKKAKKEKVKKH) is 5 X 5 AA tandem repeats of K-[GAV]-K-[KH]-[DKEH]. Basic and acidic residues predominate over residues 532–565 (AKIEEAELQKQKHVDKEEDKKEESKEVQEESKEV). The span at 566-663 (QEDEEEVEED…EEEEEEEEEE (98 aa)) shows a compositional bias: acidic residues. Residues 667-678 (KIKRNLRKNAKI) are compositionally biased toward basic residues.

The sequence is that of Glutamic acid-rich protein (GARP) from Plasmodium falciparum (isolate FC27 / Papua New Guinea).